Consider the following 310-residue polypeptide: Protein CUP-SHAPED COTYLEDON 1 (310 aa).

An NAC domain is found at 20 to 172 (MPPGFRFHPT…EWVLCKVCLK (153 aa)). A DNA-binding region spans residues 119-178 (LGMKKTLVFYKGRAPKGEKSCWVMHEYRLDGKFSYHYISSSAKDEWVLCKVCLKSGVVSR). Involved in transactivation activity stretches follow at residues 179-210 (ETNLISSSSSSAVTGEFSSAGSAIAPIINTFA) and 306-310 (WPFTL).

Expressed in inflorescence stems, rosette leaves, aerial parts of seedlings, flowers, floral buds and roots.

The protein resides in the nucleus. In terms of biological role, transcription activator of STM and KNAT6. Involved in molecular mechanisms regulating shoot apical meristem (SAM) formation during embryogenesis and organ separation. Required for the fusion of septa of gynoecia along the length of the ovaries. Activates the shoot formation in callus in a STM-dependent manner. Seems to act as an inhibitor of cell division. This Arabidopsis thaliana (Mouse-ear cress) protein is Protein CUP-SHAPED COTYLEDON 1 (NAC054).